The following is a 248-amino-acid chain: MENFKGLQKSLYIWTDSADLDKRVEQLKSATGGDVALENVHRLSFSSYANSSFDLIVIECAQLTDSYVKLLHMLKPSGKLHLVSFIGPAASLLQEIKLSGFINCREDSPDALTAEKPGYETGSSARLSFAKKNASAINVWKISGDDEELIDEEELLDEEDKQKPDPAGLRVCSTTGKRKACKNCSCGLAEELETEKQSQKATENAKSSCGNCYLGDAFRCSTCPYLGMPAFKPGEKVQLGDNLLKSDI.

Positions 4–129 (FKGLQKSLYI…ETGSSARLSF (126 aa)) are N-terminal SAM-like domain. The interval 130-161 (AKKNASAINVWKISGDDEELIDEEELLDEEDK) is linker. Residues cysteine 172, cysteine 181, cysteine 184, and cysteine 186 each contribute to the [2Fe-2S] cluster site. The tract at residues 172–186 (CSTTGKRKACKNCSC) is fe-S binding site A. [4Fe-4S] cluster contacts are provided by cysteine 209, cysteine 212, cysteine 220, and cysteine 223. 2 consecutive short sequence motifs (cx2C motif) follow at residues 209 to 212 (CGNC) and 220 to 223 (CSTC). The fe-S binding site B stretch occupies residues 209-223 (CGNCYLGDAFRCSTC).

It belongs to the anamorsin family. As to quaternary structure, monomer. It depends on [2Fe-2S] cluster as a cofactor. [4Fe-4S] cluster serves as cofactor.

It is found in the cytoplasm. Its subcellular location is the mitochondrion intermembrane space. In terms of biological role, component of the cytosolic iron-sulfur (Fe-S) protein assembly (CIA) machinery. Required for the maturation of extramitochondrial Fe-S proteins. Part of an electron transfer chain functioning in an early step of cytosolic Fe-S biogenesis, facilitating the de novo assembly of a [4Fe-4S] cluster on the cytosolic Fe-S scaffold complex. Electrons are transferred from NADPH via a FAD- and FMN-containing diflavin oxidoreductase. Together with the diflavin oxidoreductase, also required for the assembly of the diferric tyrosyl radical cofactor of ribonucleotide reductase (RNR), probably by providing electrons for reduction during radical cofactor maturation in the catalytic small subunit. The chain is Anamorsin homolog from Drosophila erecta (Fruit fly).